The following is a 162-amino-acid chain: UPF0114 protein Shewmr4_0646 (162 aa).

The next 4 membrane-spanning stretches (helical) occupy residues 15–35 (IMAP…IKFF), 53–73 (LVLV…IVMV), 108–128 (KVAA…FMDV), and 136–156 (IMWY…MGYL).

Belongs to the UPF0114 family.

Its subcellular location is the cell membrane. The chain is UPF0114 protein Shewmr4_0646 from Shewanella sp. (strain MR-4).